We begin with the raw amino-acid sequence, 373 residues long: Glutamine synthetase (373 aa).

The residue at position 2 (Ala2) is an N-acetylalanine. Residues 2 to 25 are required for glutamine-induced ubiquitination by CRL4(CRBN) and proteasomal degradation; sequence ATSASSHLNKGIKQMYMNLPQGEK. Lys11 and Lys14 each carry N6-acetyllysine. The region spanning 24–106 is the GS beta-grasp domain; that stretch reads EKIQLMYIWV…VFCEVFKYNR (83 aa). Tyr104 is modified (phosphotyrosine). One can recognise a GS catalytic domain in the interval 113 to 373; sequence LRHSCKRIMD…TGDEPFQYKN (261 aa). Glu134 lines the ATP pocket. Glu134, Glu136, Glu196, and Glu203 together coordinate Mn(2+). Residue 203–208 coordinates ATP; the sequence is EFQIGP. 246–247 contributes to the L-glutamate binding site; sequence NW. His253 serves as a coordination point for Mn(2+). ATP-binding positions include 255–257, Arg319, and Arg324; that span reads NFS. Arg319 is a binding site for L-glutamate. Residue 336–338 coordinates ADP; that stretch reads YFE. Glu338 provides a ligand contact to Mn(2+). Arg340 serves as a coordination point for L-glutamate. Ser343 is modified (phosphoserine).

This sequence belongs to the glutamine synthetase family. In terms of assembly, decamer; composed of two pentamers. Interacts with PALMD. Interacts with RHOJ. Interacts with BEST2; this interaction tethers a fraction of GLUL to the membrane, causing a decrease of cytosolic glutamine synthase (GS) activity and inhibits the chloride channel activity of BEST2 by affecting the gating at the aperture in the absence of intracellular glutamate. Mg(2+) serves as cofactor. Mn(2+) is required as a cofactor. In terms of processing, palmitoylated; undergoes autopalmitoylation. Post-translationally, acetylated by EP300/p300; acetylation is stimulated by increased glutamine levels and promotes ubiquitin-mediated proteasomal degradation. Ubiquitinated by ZNRF1. Ubiquitinated by the DCX (DDB1-CUL4-X-box) E3 ubiquitin-protein ligase complex called CRL4(CRBN), leading to proteasomal degradation. In terms of tissue distribution, in the adult liver, expression is restricted to a small population of hepatocytes which form only a small rim of one to three hepatocytes around the central veins. Expressed in lung microvascular endothelial cells.

It localises to the cytoplasm. Its subcellular location is the cytosol. It is found in the microsome. The protein resides in the mitochondrion. The protein localises to the cell membrane. It catalyses the reaction L-glutamate + NH4(+) + ATP = L-glutamine + ADP + phosphate + H(+). It carries out the reaction L-cysteinyl-[protein] + hexadecanoyl-CoA = S-hexadecanoyl-L-cysteinyl-[protein] + CoA. Glutamine synthetase activity is inhibited by methionine sulfoximine (MSO). Its function is as follows. Glutamine synthetase that catalyzes the ATP-dependent conversion of glutamate and ammonia to glutamine. Its role depends on tissue localization: in the brain, it regulates the levels of toxic ammonia and converts neurotoxic glutamate to harmless glutamine, whereas in the liver, it is one of the enzymes responsible for the removal of ammonia. Plays a key role in ammonium detoxification during erythropoiesis: the glutamine synthetase activity is required to remove ammonium generated by porphobilinogen deaminase (HMBS) during heme biosynthesis to prevent ammonium accumulation and oxidative stress. Essential for proliferation of fetal skin fibroblasts. Independently of its glutamine synthetase activity, required for endothelial cell migration during vascular development. Involved in angiogenesis by regulating membrane localization and activation of the GTPase RHOJ, possibly by promoting RHOJ palmitoylation. May act as a palmitoyltransferase for RHOJ: able to autopalmitoylate and then transfer the palmitoyl group to RHOJ. Plays a role in ribosomal 40S subunit biogenesis. Through the interaction with BEST2, inhibits BEST2 channel activity by affecting the gating at the aperture in the absence of intracellular L-glutamate, but sensitizes BEST2 to intracellular L-glutamate, which promotes the opening of BEST2 and thus relieves its inhibitory effect on BEST2. In Rattus norvegicus (Rat), this protein is Glutamine synthetase.